We begin with the raw amino-acid sequence, 381 residues long: L-lactate dehydrogenase (381 aa).

Residues 1–380 (MIISASTDYR…SRDSLVRELG (380 aa)) enclose the FMN hydroxy acid dehydrogenase domain. Substrate is bound at residue Tyr-24. The FMN site is built by Ser-106 and Gln-127. Tyr-129 lines the substrate pocket. FMN is bound at residue Thr-155. A substrate-binding site is contributed by Arg-164. Lys-251 serves as a coordination point for FMN. Residue His-275 is the Proton acceptor of the active site. Position 278 (Arg-278) interacts with substrate. Residue 306–330 (DSGIRSGLDVVRMIALGADTVLIGR) participates in FMN binding.

The protein belongs to the FMN-dependent alpha-hydroxy acid dehydrogenase family. As to quaternary structure, homotetramer. FMN serves as cofactor.

The protein localises to the cell inner membrane. The enzyme catalyses (S)-lactate + A = pyruvate + AH2. In terms of biological role, catalyzes the conversion of L-lactate to pyruvate. Is coupled to the respiratory chain. This is L-lactate dehydrogenase from Pseudomonas putida (strain W619).